The following is a 311-amino-acid chain: Glycerol-3-phosphate dehydrogenase [NAD(P)+] (311 aa).

Residues W11, R30, R31, and K95 each coordinate NADPH. Positions 95, 123, and 125 each coordinate sn-glycerol 3-phosphate. A127 contacts NADPH. Sn-glycerol 3-phosphate-binding residues include K177, D230, S240, R241, and N242. The active-site Proton acceptor is K177. R241 provides a ligand contact to NADPH. NADPH is bound by residues V265 and E267.

This sequence belongs to the NAD-dependent glycerol-3-phosphate dehydrogenase family.

It is found in the cytoplasm. It carries out the reaction sn-glycerol 3-phosphate + NAD(+) = dihydroxyacetone phosphate + NADH + H(+). The enzyme catalyses sn-glycerol 3-phosphate + NADP(+) = dihydroxyacetone phosphate + NADPH + H(+). It participates in membrane lipid metabolism; glycerophospholipid metabolism. Functionally, catalyzes the reduction of the glycolytic intermediate dihydroxyacetone phosphate (DHAP) to sn-glycerol 3-phosphate (G3P), the key precursor for phospholipid synthesis. This Bartonella bacilliformis (strain ATCC 35685 / KC583 / Herrer 020/F12,63) protein is Glycerol-3-phosphate dehydrogenase [NAD(P)+].